A 433-amino-acid polypeptide reads, in one-letter code: Glutamate-1-semialdehyde 2,1-aminomutase (433 aa).

Lysine 272 is modified (N6-(pyridoxal phosphate)lysine).

The protein belongs to the class-III pyridoxal-phosphate-dependent aminotransferase family. HemL subfamily. Homodimer. It depends on pyridoxal 5'-phosphate as a cofactor.

It localises to the cytoplasm. The enzyme catalyses (S)-4-amino-5-oxopentanoate = 5-aminolevulinate. It functions in the pathway porphyrin-containing compound metabolism; protoporphyrin-IX biosynthesis; 5-aminolevulinate from L-glutamyl-tRNA(Glu): step 2/2. It participates in porphyrin-containing compound metabolism; chlorophyll biosynthesis. In Synechococcus sp. (strain WH7803), this protein is Glutamate-1-semialdehyde 2,1-aminomutase.